Here is a 348-residue protein sequence, read N- to C-terminus: Lipopolysaccharide heptosyltransferase 2 (348 aa).

It belongs to the glycosyltransferase 9 family.

It carries out the reaction an L-alpha-D-Hep-(1-&gt;5)-[alpha-Kdo-(2-&gt;4)]-alpha-Kdo-(2-&gt;6)-lipid A + ADP-L-glycero-beta-D-manno-heptose = an L-alpha-D-Hep-(1-&gt;3)-L-alpha-D-Hep-(1-&gt;5)-[alpha-Kdo-(2-&gt;4)]-alpha-Kdo-(2-&gt;6)-lipid A + ADP + H(+). The catalysed reaction is L-alpha-D-Hep-(1-&gt;5)-[alpha-Kdo-(2-&gt;4)]-alpha-Kdo-(2-&gt;6)-lipid A (E. coli) + ADP-L-glycero-beta-D-manno-heptose = L-alpha-D-Hep-(1-&gt;3)-L-alpha-D-Hep-(1-&gt;5)-[alpha-Kdo-(2-&gt;4)]-alpha-Kdo-(2-&gt;6)-lipid A (E. coli) + ADP + H(+). The protein operates within bacterial outer membrane biogenesis; LPS core biosynthesis. In terms of biological role, glycosyltransferase involved in the biosynthesis of the core oligosaccharide region of lipopolysaccharide (LPS). Catalyzes the addition of the second heptose unit to the heptosyl-Kdo2-lipid A module. The analog ADP-mannose can serve as an alternative donor in place of ADP-L-glycero-D-manno-heptose, but with lower efficiency. The sequence is that of Lipopolysaccharide heptosyltransferase 2 from Escherichia coli (strain K12).